The sequence spans 295 residues: Tyrosine recombinase XerC (295 aa).

The Core-binding (CB) domain maps to 1–84 (MTLEEQFLSY…SLKSFYRLLT (84 aa)). Positions 105 to 289 (KLPEFFYQDE…SMQHLTAEYR (185 aa)) constitute a Tyr recombinase domain. Catalysis depends on residues Arg145, Lys169, His241, Arg244, and His267. The O-(3'-phospho-DNA)-tyrosine intermediate role is filled by Tyr276.

It belongs to the 'phage' integrase family. XerC subfamily. In terms of assembly, forms a cyclic heterotetrameric complex composed of two molecules of XerC and two molecules of XerD.

The protein localises to the cytoplasm. Functionally, site-specific tyrosine recombinase, which acts by catalyzing the cutting and rejoining of the recombining DNA molecules. The XerC-XerD complex is essential to convert dimers of the bacterial chromosome into monomers to permit their segregation at cell division. It also contributes to the segregational stability of plasmids. This chain is Tyrosine recombinase XerC, found in Lactobacillus leichmannii.